A 430-amino-acid chain; its full sequence is Glutamyl-tRNA reductase (430 aa).

Residues 50–53 (TCNR), Ser-108, 113–115 (EPQ), and Gln-119 contribute to the substrate site. Residue Cys-51 is the Nucleophile of the active site. 188–193 (GAGEMA) contacts NADP(+).

It belongs to the glutamyl-tRNA reductase family. In terms of assembly, homodimer.

The enzyme catalyses (S)-4-amino-5-oxopentanoate + tRNA(Glu) + NADP(+) = L-glutamyl-tRNA(Glu) + NADPH + H(+). The protein operates within porphyrin-containing compound metabolism; protoporphyrin-IX biosynthesis; 5-aminolevulinate from L-glutamyl-tRNA(Glu): step 1/2. Functionally, catalyzes the NADPH-dependent reduction of glutamyl-tRNA(Glu) to glutamate 1-semialdehyde (GSA). The polypeptide is Glutamyl-tRNA reductase (Desulfovibrio desulfuricans (strain ATCC 27774 / DSM 6949 / MB)).